Here is a 266-residue protein sequence, read N- to C-terminus: Integral membrane protein 2B (266 aa).

Residues 1–54 (MVKVTFNSALAQKEAKKDEPKSSEEALIVPPDAVAVDCKDPGDVVPVGQRRAWC) are Cytoplasmic-facing. The chain crosses the membrane as a helical; Signal-anchor for type II membrane protein span at residues 55 to 75 (WCMCFGLAFMLAGVILGGAYL). Residues 76–266 (YKYFALQPDD…KFAVETLICS (191 aa)) lie on the Lumenal side of the membrane. A necessary for interaction with APP and inhibitor effects on APP processing region spans residues 102 to 134 (EPSADAPAARYQTIEENIKIFEEDAVEFISVPV). Positions 137 to 231 (FADSDPANIV…LCHDKETYKL (95 aa)) constitute a BRICHOS domain. Disulfide bonds link C164–C223 and C248–C265. N-linked (GlcNAc...) asparagine glycosylation occurs at N170.

This sequence belongs to the ITM2 family. Homodimer; disulfide-linked. Interacts with SPPL2A and SPPL2B. Interacts with APP. Mature BRI2 (mBRI2) interacts with the APP amyloid-beta A4 protein; the interaction occurs at the cell surface and in the endocytic compartments and enable alpha- and beta-secretase-induced APP cleavage inhibition. Mature BRI2 (mBRI2) interacts with the APP C99; the interaction occurs in the endocytic compartments and enable gamma-secretase-induced C99 cleavage inhibition. May form heterodimers with Bri23 peptide and APP amyloid-beta protein 40. Interacts with ADAM7 in sperm; the interaction increases following capacitation. Post-translationally, the ectodomain C-terminal part of the imBRI2 is processed by furin producing a secreted Bri23 peptide and a mature BRI2, membrane form (mBRI2). The remaining part of the ectodomain of mBRI2 containing the BRICHOS domain is cleaved by ADAM10 and is secreted (BRI2C, soluble form). The membrane-bound N-terminal fragment (BRI2C, membrane form) is further proteolytically processed by SPPL2A and SPPL2B through regulated intramembrane proteolysis producing a secreted C-peptide and a BRI2 intracellular domain (BRI2 ICD) released in the cytosol. Shedding by ADAM10 facilitates intramembrane cleavage but is not absolutely required for BRI2 ICD generation. In terms of processing, glycosylation at Asn-170 is important for cell surface localization, but doesn't affect furin- and ADAM10-induced proteolytic processing. Expressed in the brain, testis, testicular sperm, epididymis and mature epididymal sperm (at protein level).

Its subcellular location is the golgi apparatus membrane. It is found in the cell membrane. The protein localises to the endosome membrane. It localises to the secreted. Its function is as follows. Plays a regulatory role in the processing of the amyloid-beta A4 precursor protein (APP) and acts as an inhibitor of the amyloid-beta peptide aggregation and fibrils deposition. Plays a role in the induction of neurite outgrowth. Functions as a protease inhibitor by blocking access of secretases to APP cleavage sites. Functionally, mature BRI2 (mBRI2) functions as a modulator of the amyloid-beta A4 precursor protein (APP) processing leading to a strong reduction in the secretion of secretase-processed amyloid-beta protein 40 and amyloid-beta protein 42. In terms of biological role, bri23 peptide prevents aggregation of APP amyloid-beta protein 42 into toxic oligomers. In Mus musculus (Mouse), this protein is Integral membrane protein 2B (Itm2b).